Consider the following 79-residue polypeptide: Acyl carrier protein (79 aa).

One can recognise a Carrier domain in the interval 2–77; the sequence is ENIEQRVKKI…QAIDYVNAHL (76 aa). The residue at position 37 (Ser37) is an O-(pantetheine 4'-phosphoryl)serine.

It belongs to the acyl carrier protein (ACP) family. 4'-phosphopantetheine is transferred from CoA to a specific serine of apo-ACP by AcpS. This modification is essential for activity because fatty acids are bound in thioester linkage to the sulfhydryl of the prosthetic group.

Its subcellular location is the cytoplasm. The protein operates within lipid metabolism; fatty acid biosynthesis. Functionally, carrier of the growing fatty acid chain in fatty acid biosynthesis. This Azoarcus sp. (strain BH72) protein is Acyl carrier protein.